Consider the following 131-residue polypeptide: Small ribosomal subunit protein uS8 (131 aa).

Belongs to the universal ribosomal protein uS8 family. In terms of assembly, part of the 30S ribosomal subunit. Contacts proteins S5 and S12.

In terms of biological role, one of the primary rRNA binding proteins, it binds directly to 16S rRNA central domain where it helps coordinate assembly of the platform of the 30S subunit. The polypeptide is Small ribosomal subunit protein uS8 (Mycoplasmopsis agalactiae (strain NCTC 10123 / CIP 59.7 / PG2) (Mycoplasma agalactiae)).